The primary structure comprises 261 residues: 8-demethyl-8-(2,3-dimethoxy-alpha-L-rhamnosyl)-tetracenomycin-C 4'-O-methyltransferase (261 aa).

S-adenosyl-L-methionine contacts are provided by residues 53–54 (TM), 81–85 (ETGVW), 111–115 (DSFEG), phenylalanine 167, 185–186 (DG), and serine 191. Residue aspartate 185 coordinates Mg(2+). Mg(2+) is bound by residues aspartate 212 and aspartate 213.

This sequence belongs to the methyltransferase TylF/MycF family. It depends on Mg(2+) as a cofactor.

The enzyme catalyses 8-demethyl-8-(2,3-di-O-methyl-alpha-L-rhamnosyl)-tetracenomycin C + S-adenosyl-L-methionine = 8-demethyl-8-(2,3,4-tri-O-methyl-alpha-L-rhamnosyl)-tetracenomycin C + S-adenosyl-L-homocysteine + H(+). It functions in the pathway antibiotic biosynthesis. Its function is as follows. O-methyltransferase involved in the biosynthesis of the permethylated L-rhamnose moiety of elloramycin, an antitumor polyketide. Mediates the methylation of the hydroxy groups at the 4'-position after the sugar moiety has been attached to the aglycon. The chain is 8-demethyl-8-(2,3-dimethoxy-alpha-L-rhamnosyl)-tetracenomycin-C 4'-O-methyltransferase from Streptomyces olivaceus.